The primary structure comprises 270 residues: Aliphatic sulfonates import ATP-binding protein SsuB 2 (270 aa).

The ABC transporter domain occupies 17–241; the sequence is LLDLRIARKL…PRDRRDPSLA (225 aa). 50–57 lines the ATP pocket; it reads GPSGCGKS.

The protein belongs to the ABC transporter superfamily. Aliphatic sulfonates importer (TC 3.A.1.17.2) family. As to quaternary structure, the complex is composed of two ATP-binding proteins (SsuB), two transmembrane proteins (SsuC) and a solute-binding protein (SsuA).

It is found in the cell inner membrane. It carries out the reaction ATP + H2O + aliphatic sulfonate-[sulfonate-binding protein]Side 1 = ADP + phosphate + aliphatic sulfonateSide 2 + [sulfonate-binding protein]Side 1.. Part of the ABC transporter complex SsuABC involved in aliphatic sulfonates import. Responsible for energy coupling to the transport system. In Burkholderia cenocepacia (strain HI2424), this protein is Aliphatic sulfonates import ATP-binding protein SsuB 2.